Reading from the N-terminus, the 333-residue chain is 4-hydroxy-2-oxovalerate aldolase (333 aa).

The 251-residue stretch at V4–M254 folds into the Pyruvate carboxyltransferase domain. Position 12-13 (R12–D13) interacts with substrate. Residue D13 coordinates Mn(2+). Catalysis depends on H16, which acts as the Proton acceptor. H193 contributes to the substrate binding site. Mn(2+)-binding residues include H193 and H195. Residue Y284 coordinates substrate.

This sequence belongs to the 4-hydroxy-2-oxovalerate aldolase family.

It carries out the reaction (S)-4-hydroxy-2-oxopentanoate = acetaldehyde + pyruvate. This Desulfitobacterium hafniense (strain DSM 10664 / DCB-2) protein is 4-hydroxy-2-oxovalerate aldolase.